The following is a 127-amino-acid chain: Probable toxin y4kH (127 aa).

It belongs to the MbcT/ParT/Res family.

In terms of biological role, probable toxic component of a type II toxin-antitoxin (TA) system. It is not known which gene encodes its antitoxin. This is Probable toxin y4kH from Sinorhizobium fredii (strain NBRC 101917 / NGR234).